The sequence spans 185 residues: Threonylcarbamoyl-AMP synthase (185 aa).

Positions 4–185 (SWRVQQAAQD…IATAQIVRAG (182 aa)) constitute a YrdC-like domain.

It belongs to the SUA5 family. TsaC subfamily.

Its subcellular location is the cytoplasm. The enzyme catalyses L-threonine + hydrogencarbonate + ATP = L-threonylcarbamoyladenylate + diphosphate + H2O. In terms of biological role, required for the formation of a threonylcarbamoyl group on adenosine at position 37 (t(6)A37) in tRNAs that read codons beginning with adenine. Catalyzes the conversion of L-threonine, HCO(3)(-)/CO(2) and ATP to give threonylcarbamoyl-AMP (TC-AMP) as the acyladenylate intermediate, with the release of diphosphate. This chain is Threonylcarbamoyl-AMP synthase, found in Pseudomonas syringae pv. syringae (strain B728a).